The primary structure comprises 806 residues: Leucine--tRNA ligase (806 aa).

The 'HIGH' region signature appears at 40–51; the sequence is PYPSGAGLHVGH. A 'KMSKS' region motif is present at residues 576–580; the sequence is KMSKS. Residue lysine 579 participates in ATP binding.

This sequence belongs to the class-I aminoacyl-tRNA synthetase family.

Its subcellular location is the cytoplasm. It carries out the reaction tRNA(Leu) + L-leucine + ATP = L-leucyl-tRNA(Leu) + AMP + diphosphate. The sequence is that of Leucine--tRNA ligase from Halalkalibacterium halodurans (strain ATCC BAA-125 / DSM 18197 / FERM 7344 / JCM 9153 / C-125) (Bacillus halodurans).